The sequence spans 780 residues: ATP-dependent 6-phosphofructokinase, muscle type (780 aa).

N-acetylthreonine is present on Thr-2. The tract at residues 2-390 is N-terminal catalytic PFK domain 1; the sequence is THEEHHAART…NWEVYKLLAH (389 aa). ATP is bound by residues Gly-25, 88 to 89, and 118 to 121; these read RC and GDGS. Position 119 (Asp-119) interacts with Mg(2+). Ser-133 carries the phosphoserine modification. Residues 164 to 166, Arg-201, 208 to 210, Glu-264, Arg-292, and 298 to 301 each bind substrate; these read SID, MGR, and HVQR. Catalysis depends on Asp-166, which acts as the Proton acceptor. Residue Ser-377 is modified to Phosphoserine. The tract at residues 391–401 is interdomain linker; it reads IRPPAPKSGSY. The interval 402–780 is C-terminal regulatory PFK domain 2; that stretch reads TVAVMNVGAP…SRKRSGEATV (379 aa). Beta-D-fructose 2,6-bisphosphate contacts are provided by residues Arg-471 and 528 to 532; that span reads TVSNN. O-linked (GlcNAc) serine glycosylation occurs at Ser-530. Lys-557 bears the N6-(2-hydroxyisobutyryl)lysine mark. Residues Arg-566, 573–575, Glu-629, Arg-655, and 661–664 each bind beta-D-fructose 2,6-bisphosphate; these read MGG and HMQQ. Position 667 is a phosphoserine (Ser-667). Arg-735 lines the beta-D-fructose 2,6-bisphosphate pocket. Position 775 is a phosphoserine; by PKA (Ser-775).

It belongs to the phosphofructokinase type A (PFKA) family. ATP-dependent PFK group I subfamily. Eukaryotic two domain clade 'E' sub-subfamily. As to quaternary structure, homo- and heterotetramers. Phosphofructokinase (PFK) enzyme functions as a tetramer composed of different combinations of 3 types of subunits, called PFKM (M), PFKL (L) and PFKP (P). The composition of the PFK tetramer differs according to the tissue type it is present in. The kinetic and regulatory properties of the tetrameric enzyme are dependent on the subunit composition, hence can vary across tissues. Interacts (via C-terminus) with HK1 (via N-terminal spermatogenic cell-specific region). The cofactor is Mg(2+). In terms of processing, glcNAcylation decreases enzyme activity.

The protein localises to the cytoplasm. It catalyses the reaction beta-D-fructose 6-phosphate + ATP = beta-D-fructose 1,6-bisphosphate + ADP + H(+). It participates in carbohydrate degradation; glycolysis; D-glyceraldehyde 3-phosphate and glycerone phosphate from D-glucose: step 3/4. With respect to regulation, allosterically activated by ADP, AMP, or fructose 2,6-bisphosphate, and allosterically inhibited by ATP or citrate. In terms of biological role, catalyzes the phosphorylation of D-fructose 6-phosphate to fructose 1,6-bisphosphate by ATP, the first committing step of glycolysis. In Oryctolagus cuniculus (Rabbit), this protein is ATP-dependent 6-phosphofructokinase, muscle type (PFKM).